A 250-amino-acid chain; its full sequence is Alpha/beta hydrolase nvfD (250 aa).

Catalysis depends on charge relay system residues Asp198 and His226.

Belongs to the AB hydrolase superfamily.

The protein operates within secondary metabolite biosynthesis; terpenoid biosynthesis. Its function is as follows. Alpha/beta hydrolase; part of the gene cluster that mediates the biosynthesis of novofumigatonin, a heavily oxygenated meroterpenoid containing a unique orthoester moiety. The first step of the pathway is the synthesis of 3,5-dimethylorsellinic acid (DMOA) by the polyketide synthase nvfA via condensation of one acetyl-CoA starter unit with 3 malonyl-CoA units and 2 methylations. DMOA is then converted to farnesyl-DMOA by the farnesyltransferase nvfB. Epoxydation by FAD-dependent monooxygenase nvfK, followed by a protonation-initiated cyclization catalyzed by the terpene cyclase nvfL leads to the production of asnavolin H. The short chain dehydrogenase nvfC then as a 3-OH dehydrogenase of asnovolin H to yield chemesin D. There are two branches to synthesize asnovolin A from chemesin D. In one branch, chemesin D undergoes Baeyer-Villiger oxidation by nvfH, methylation by nvfJ, and enoyl reduction by the nvfM D enoylreductase that reduces the double bond between C-5'and C-6', to form respectively asnovolin I, asnovolin K, and asnovolin A. In the other branch, the methylation precedes the Baeyer-Villiger oxidation and the enoyl reduction to yield asnovolin A via the asnovolin J intermediate. Asnovolin A is further converted to fumigatonoid A by the Fe(II)/2-oxoglutarate-dependent dioxygenase nvfI that catalyzes an endoperoxidation reaction. The alpha/beta hydrolase nvfD then acts as an epimerase that converts fumigatonoid A to its C-5' epimer, which then undergoes spontaneous or nvfD-catalyzed lactonization. The following step utilizes the ketoreductase nvfG to produce fumigatonoid B. The dioxygenase nvfE further converts fumigatonoid B into fumigatonoid C. Finally the Fe(II)/2-oxoglutarate-dependent dioxygenase nvfF catalyzes two rounds of oxidation to transform fumigatonoid C into the end product, novofumigatonin A. This chain is Alpha/beta hydrolase nvfD, found in Aspergillus novofumigatus (strain IBT 16806).